A 302-amino-acid polypeptide reads, in one-letter code: Tegument protein VP22 (302 aa).

Positions 1–10 (MASSDGDRLC) are enriched in basic and acidic residues. Disordered stretches follow at residues 1 to 42 (MASS…PDDS) and 125 to 167 (SFTK…TATS). Positions 154-244 (RPISFSTAPK…ANEADLGEGA (91 aa)) are interaction with gE. Polar residues predominate over residues 157–167 (SFSTAPKTATS). Positions 212 to 224 (LDRLLTGAVIRIT) match the Nuclear export signal motif. A disordered region spans residues 243-302 (GASVSKRGHNRKTGDLQGGMGNEPMYAQVRKPKSRTDTQTTGRITNRSRARSASRTDARK).

The protein belongs to the alphaherpesvirinae VP22 tegument protein family. In terms of assembly, interacts with gE (via C-terminus); this interaction is necessary for the recruitment of VP22/ORF9 to the Golgi and its packaging into virions. Interacts with gM (via C-terminus). Interacts with VP16/ORF10; this interaction allows the formation of a tripartite complex composed of VP16/ORF10, VP22/ORF9 and VHS/ORF17. Interacts with the capsid-binding protein ORF44. Interacts with host CGAS. In terms of processing, highly phosphorylated in the host cell. Packaging is selective for underphosphorylated forms.

It is found in the virion tegument. Its subcellular location is the host cytoplasm. It localises to the host nucleus. The protein localises to the host Golgi apparatus. In terms of biological role, tegument protein that plays different roles during the time course of infection. Participates in both the accumulation of viral mRNAs and viral protein translation at late time of infection. Modulates the RNase activity of the virion host shutoff protein ORF17 probably to ensure necessary levels of key cellular mRNAs and proteins. Plays a role in microtubule reorganization that occurs after viral infection by stabilizing microtubule network. Plays a role in the inhibition of host innate immune system by targeting the CGAS enzymatic activity which is the principal cytosolic DNA sensor that detects invading viral DNA. Acts by mediating disruption of liquid-like droplets in which CGAS is activated, thereby preventing CGAS activity. In Varicella-zoster virus (strain Oka vaccine) (HHV-3), this protein is Tegument protein VP22.